Reading from the N-terminus, the 107-residue chain is Thioredoxin-1 (107 aa).

A Thioredoxin domain is found at 2–106; sequence ASVRTMNDYH…LTNMMAKLVK (105 aa). Active-site nucleophile residues include Cys-31 and Cys-34. A disulfide bridge links Cys-31 with Cys-34.

The protein belongs to the thioredoxin family. Ovary specific. Expressed present in the nurse cells from stage 9 of ovary development and is transported into the oocyte. Expressed throughout oogenesis.

It is found in the nucleus. Participates in various redox reactions through the reversible oxidation of its active center dithiol to a disulfide and catalyzes dithiol-disulfide exchange reactions. As a reducing substrate of peroxiredoxin 1, thioredoxin 2 is preferred over thioredoxin 1. Required for female meiosis and early embryonic development. The polypeptide is Thioredoxin-1 (dhd) (Drosophila melanogaster (Fruit fly)).